Here is a 352-residue protein sequence, read N- to C-terminus: Photosystem II D2 protein 2 (352 aa).

The chain crosses the membrane as a helical span at residues 40-60 (CAYLALGGWLTGTSFVTSWYT). H117 serves as a coordination point for chlorophyll a. The chain crosses the membrane as a helical span at residues 124–140 (GFMLRQFEIARLVGVRP). Residues Q129 and N142 each coordinate pheophytin a. A helical membrane pass occupies residues 152-165 (VFVSVFLMYPLGQS). Chlorophyll a is bound at residue H197. Residues 207–227 (GALLCAIHGATVENTLFEDSE) traverse the membrane as a helical segment. A plastoquinone contacts are provided by H214 and F261. H214 contacts Fe cation. Residue H268 coordinates Fe cation. Residues 278–294 (GLWMSSIGIVGLALNLR) form a helical membrane-spanning segment.

Belongs to the reaction center PufL/M/PsbA/D family. PSII is composed of 1 copy each of membrane proteins PsbA, PsbB, PsbC, PsbD, PsbE, PsbF, PsbH, PsbI, PsbJ, PsbK, PsbL, PsbM, PsbT, PsbX, PsbY, PsbZ, Psb30/Ycf12, peripheral proteins PsbO, CyanoQ (PsbQ), PsbU, PsbV and a large number of cofactors. It forms dimeric complexes. The cofactor is The D1/D2 heterodimer binds P680, chlorophylls that are the primary electron donor of PSII, and subsequent electron acceptors. It shares a non-heme iron and each subunit binds pheophytin, quinone, additional chlorophylls, carotenoids and lipids. There is also a Cl(-1) ion associated with D1 and D2, which is required for oxygen evolution. The PSII complex binds additional chlorophylls, carotenoids and specific lipids..

It localises to the cellular thylakoid membrane. It carries out the reaction 2 a plastoquinone + 4 hnu + 2 H2O = 2 a plastoquinol + O2. Functionally, photosystem II (PSII) is a light-driven water:plastoquinone oxidoreductase that uses light energy to abstract electrons from H(2)O, generating O(2) and a proton gradient subsequently used for ATP formation. It consists of a core antenna complex that captures photons, and an electron transfer chain that converts photonic excitation into a charge separation. The D1/D2 (PsbA/PsbD) reaction center heterodimer binds P680, the primary electron donor of PSII as well as several subsequent electron acceptors. D2 is needed for assembly of a stable PSII complex. The chain is Photosystem II D2 protein 2 from Synechococcus sp. (strain ATCC 27144 / PCC 6301 / SAUG 1402/1) (Anacystis nidulans).